Consider the following 496-residue polypeptide: Cytochrome P450 71D18 (496 aa).

The chain crosses the membrane as a helical; Signal-anchor for type II membrane protein span at residues E2 to I22. C436 contacts heme.

This sequence belongs to the cytochrome P450 family. Heme serves as cofactor.

It localises to the endoplasmic reticulum membrane. The enzyme catalyses (4S)-limonene + reduced [NADPH--hemoprotein reductase] + O2 = (1S,5R)-carveol + oxidized [NADPH--hemoprotein reductase] + H2O + H(+). Functionally, hydroxylates (-)-(4S)-limonene to (-)-trans-carveol, a precursor of (-)-carvone. Fluorinated substrate analogs are hydroxylated with the same regio- and stereochemistry. The polypeptide is Cytochrome P450 71D18 (CYP71D18) (Mentha gracilis (Gingermint)).